Here is a 412-residue protein sequence, read N- to C-terminus: Putative phosphate permease PF1020 (412 aa).

10 helical membrane passes run 7–27 (MLAD…AWAI), 50–70 (AVII…KTVT), 88–108 (VLIF…VIAT), 119–139 (SIIG…IVNW), 143–163 (IKVV…AYLV), 187–207 (FWIG…VLHG), 213–233 (GFLK…SLIL), 298–318 (WILA…GYKV), 335–355 (FTID…GMPI), and 384–404 (DIII…GIIF).

This sequence belongs to the inorganic phosphate transporter (PiT) (TC 2.A.20) family.

It localises to the cell membrane. Functionally, potential transporter for phosphate. This is Putative phosphate permease PF1020 from Pyrococcus furiosus (strain ATCC 43587 / DSM 3638 / JCM 8422 / Vc1).